Consider the following 427-residue polypeptide: MSQSDILYSQAKQLIPGGVNSPVRAFNGVGGTPLFIKHADGAYLYDVDGKAYIDYVGSWGPMVLGHNHSAIRNAVIKAAEQGLSFGAPTAAEVEMAQLVTELVPSMDMVRMVNSGTEATMSAIRLARGYTHRDKIIKFEGCYHGHADCLLVKAGSGALTIGQPNSPGVPVDFVKHTLTCTYNDLSSVREAFEQYPQEIACIIVEPVAGNMNCVPPQPEFLPGLRALCDEFGALLIIDEVMTGFRVALSGAQSYYDVEPDITCLGKIIGGGMPVGAFGGRYEVMEKLAPIGPVYQAGTLSGNPIAMAAGLACLKEVSQPGVHQRLTELTDNLAAGLTKSAKAANIPLVVNHVGGMFGIFFTDAETVTCYQDVMNCDIERFKHFFHLMLDEGVYLAPSAFEAGFMSIAHTDEDIQRTVNAAARCFAKLK.

Lys-265 carries the post-translational modification N6-(pyridoxal phosphate)lysine.

Belongs to the class-III pyridoxal-phosphate-dependent aminotransferase family. HemL subfamily. As to quaternary structure, homodimer. Pyridoxal 5'-phosphate serves as cofactor.

It is found in the cytoplasm. It carries out the reaction (S)-4-amino-5-oxopentanoate = 5-aminolevulinate. It participates in porphyrin-containing compound metabolism; protoporphyrin-IX biosynthesis; 5-aminolevulinate from L-glutamyl-tRNA(Glu): step 2/2. This chain is Glutamate-1-semialdehyde 2,1-aminomutase, found in Photorhabdus laumondii subsp. laumondii (strain DSM 15139 / CIP 105565 / TT01) (Photorhabdus luminescens subsp. laumondii).